Reading from the N-terminus, the 267-residue chain is HTH-type transcriptional activator CsvR (267 aa).

DNA-binding regions (H-T-H motif) lie at residues 183–204 and 230–253; these read AIIA…ESED and ISQI…NKHF.

Homodimer.

In terms of biological role, transcriptional activator of fimbrial genes in enterotoxigenic E.coli. The chain is HTH-type transcriptional activator CsvR from Escherichia coli.